Reading from the N-terminus, the 577-residue chain is Probable L-gulonolactone oxidase 4 (577 aa).

The signal sequence occupies residues 1–17; it reads MSFWLSLIFCFFTFASS. In terms of domain architecture, FAD-binding PCMH-type spans 46–228; the sequence is SICKAAKVEY…SQVTFELQPM (183 aa).

This sequence belongs to the oxygen-dependent FAD-linked oxidoreductase family. The cofactor is FAD.

The enzyme catalyses L-gulono-1,4-lactone + O2 = L-ascorbate + H2O2 + H(+). It participates in cofactor biosynthesis; L-ascorbate biosynthesis. Functionally, may be involved in the biosynthesis of ascorbic acid. This chain is Probable L-gulonolactone oxidase 4, found in Arabidopsis thaliana (Mouse-ear cress).